The primary structure comprises 93 residues: Small ribosomal subunit protein uS19 (93 aa).

It belongs to the universal ribosomal protein uS19 family.

Protein S19 forms a complex with S13 that binds strongly to the 16S ribosomal RNA. The chain is Small ribosomal subunit protein uS19 from Leuconostoc citreum (strain KM20).